We begin with the raw amino-acid sequence, 290 residues long: ATP synthase gamma chain (290 aa).

This sequence belongs to the ATPase gamma chain family. F-type ATPases have 2 components, CF(1) - the catalytic core - and CF(0) - the membrane proton channel. CF(1) has five subunits: alpha(3), beta(3), gamma(1), delta(1), epsilon(1). CF(0) has three main subunits: a, b and c.

The protein resides in the cell inner membrane. In terms of biological role, produces ATP from ADP in the presence of a proton gradient across the membrane. The gamma chain is believed to be important in regulating ATPase activity and the flow of protons through the CF(0) complex. This chain is ATP synthase gamma chain, found in Bacteroides fragilis (strain ATCC 25285 / DSM 2151 / CCUG 4856 / JCM 11019 / LMG 10263 / NCTC 9343 / Onslow / VPI 2553 / EN-2).